The following is a 225-amino-acid chain: Holliday junction branch migration complex subunit RuvA (225 aa).

The interval 1-71 is domain I; sequence MISWINGDLV…EDSDLLFGFT (71 aa). The segment at 72–150 is domain II; the sequence is SKDQKNFFIE…SEILSEEEKS (79 aa). The interval 151–161 is flexible linker; it reads KDEFEIKDPEI. Positions 161–225 are domain III; that stretch reads IIKMIEDLQL…LDEDSSNKDR (65 aa).

This sequence belongs to the RuvA family. Homotetramer. Forms an RuvA(8)-RuvB(12)-Holliday junction (HJ) complex. HJ DNA is sandwiched between 2 RuvA tetramers; dsDNA enters through RuvA and exits via RuvB. An RuvB hexamer assembles on each DNA strand where it exits the tetramer. Each RuvB hexamer is contacted by two RuvA subunits (via domain III) on 2 adjacent RuvB subunits; this complex drives branch migration. In the full resolvosome a probable DNA-RuvA(4)-RuvB(12)-RuvC(2) complex forms which resolves the HJ.

It is found in the cytoplasm. Its function is as follows. The RuvA-RuvB-RuvC complex processes Holliday junction (HJ) DNA during genetic recombination and DNA repair, while the RuvA-RuvB complex plays an important role in the rescue of blocked DNA replication forks via replication fork reversal (RFR). RuvA specifically binds to HJ cruciform DNA, conferring on it an open structure. The RuvB hexamer acts as an ATP-dependent pump, pulling dsDNA into and through the RuvAB complex. HJ branch migration allows RuvC to scan DNA until it finds its consensus sequence, where it cleaves and resolves the cruciform DNA. This Prochlorococcus marinus (strain AS9601) protein is Holliday junction branch migration complex subunit RuvA.